An 87-amino-acid chain; its full sequence is U1-theraphotoxin-Ct1a (87 aa).

Residues 1-23 (MKTFTLIAILTCAVLVIFHAAAA) form the signal peptide. Residues 24-48 (EELEVQDVIQPEDTLTGLATLDEDR) constitute a propeptide that is removed on maturation.

Belongs to the neurotoxin 12 (Hwtx-2) family. 03 (juruin) subfamily. In terms of processing, contains 3 disulfide bonds. Two different connectivities are observed in similar proteins (C1-C3, C2-C5, C4-C6 or C1-C4, C2-C5, C3-C6). As to expression, expressed by the venom gland.

The protein localises to the secreted. Its function is as follows. This toxin causes paralysis and death to sheep blowflies. It may inhibit voltage-gated calcium channels. This Coremiocnemis tropix (Australian tarantula spider) protein is U1-theraphotoxin-Ct1a.